The sequence spans 740 residues: MSFNDDDDGMLLNFTTDVSDASETVSRGKITGGKWKDRRKAKMMMEGRKPRVRGEKRPLESDGAPTFEELEASSSNSTSAQAPVEPKRSRFDNSSNVEQPARVTQPLQLNSQIVSSLFTSSRNIDTVTNSNAHDEKAEVTYSNAPLVGDTFDSFGITDTMVSHLNVKMKISKPTKIQKLVIPPFLQAQNDLFIHAQTGSGKTLAFLLPIFQSILSLGQNITRQSGCFALVVTPTRELANQIYQVTSELAQCCHFLVPCLLIGGERKKSEKARLRKGANFIIGTPGRVLDHLQNTKVIKEQLAPSLRYVVLDEGDKLMELGFEETLKEILNIIHGIDIDTHQFPKLPKRILHVLCSATVKGNVTKLGNVTLQNYKLISSGQKQTETTTVPDQLLQKIVIVPPKLRLVTLAGSLTTITQKHYKEGSKSDVTRTIVFLSCSDSVDFHYEVFSSHDGNHRGLVGDTARLLTKGNSILPCFNDTDDPNVICYKLHGSLSQQTRTATLKHFATNNDATKGKHLILFCTDVASRGLDLPHVSTVIEMDPPFAVEDHLHRIGRTARAGCEGESLLFLLPGEEEGYMDYIKPYHPKGWKLLTYDEQVLRPAFEGLNVRRTDKKKEDWDKHEAQAWDNNATTWHLNVERRVIEDSHFKELAVKGYMSHIRAYATHLSIEKKFFNLKCLHLGHLAKSFALRERPKSMGLQQGKAGAAAAASQKKPKEDSKSKMLRMAKMAMRQSNDEFNFA.

Residues 1–104 (MSFNDDDDGM…SNVEQPARVT (104 aa)) form a disordered region. Over residues 13–25 (NFTTDVSDASETV) the composition is skewed to polar residues. A compositionally biased stretch (basic and acidic residues) spans 43-60 (MMMEGRKPRVRGEKRPLE). The segment covering 72–81 (ASSSNSTSAQ) has biased composition (polar residues). A Q motif motif is present at residues 149-178 (DTFDSFGITDTMVSHLNVKMKISKPTKIQK). Residues 182 to 376 (PPFLQAQNDL…NVTLQNYKLI (195 aa)) form the Helicase ATP-binding domain. ATP is bound at residue 195 to 202 (AQTGSGKT). The DEAD box motif lies at 311 to 314 (DEGD). Residues 414-607 (TITQKHYKEG…VLRPAFEGLN (194 aa)) enclose the Helicase C-terminal domain. Positions 695 to 721 (SMGLQQGKAGAAAAASQKKPKEDSKSK) are disordered. Residues 697–711 (GLQQGKAGAAAAASQ) are compositionally biased toward low complexity.

Belongs to the DEAD box helicase family. DDX31/DBP7 subfamily.

The protein localises to the nucleus. The protein resides in the nucleolus. It carries out the reaction ATP + H2O = ADP + phosphate + H(+). Its function is as follows. ATP-binding RNA helicase involved in the biogenesis of 60S ribosomal subunits and is required for the normal formation of 25S and 5.8S rRNAs. This Kluyveromyces lactis (strain ATCC 8585 / CBS 2359 / DSM 70799 / NBRC 1267 / NRRL Y-1140 / WM37) (Yeast) protein is ATP-dependent RNA helicase DBP7 (DBP7).